A 121-amino-acid polypeptide reads, in one-letter code: Chromosome transmission fidelity protein 8 homolog (121 aa).

It belongs to the CTF8 family. Component of the CTF18-RFC complex, which consists of CTF18, CTF8, DSCC1, RFC2, RFC3, RFC4 and RFC5. The CTF18-RFC complex does not interact with the Rad9/Rad1/Hus1 complex. The CTF18-RFC complex interacts with POLH. CTF18/CTF8/DSCC1 associate with PCNA. CTF8 exists as a dimer with DSCC1.

It is found in the nucleus. Functionally, chromosome cohesion factor involved in sister chromatid cohesion and fidelity of chromosome transmission. Component of one of the cell nuclear antigen loader complexes, CTF18-replication factor C (CTF18-RFC), which consists of CTF18, CTF8, DSCC1, RFC2, RFC3, RFC4 and RFC5. The CTF18-RFC complex binds to single-stranded and primed DNAs and has weak ATPase activity that is stimulated the presence of primed DNA, replication protein A (RPA) and proliferating cell nuclear antigen (PCNA). The CTF18-RFC complex catalyzes the ATP-dependent loading of PCNA onto primed and gapped DNA. It also interacts with and stimulates POLH, which is suggestive of a protein network that coordinates DNA repair, recombination and chromosome cohesion reactions with replication fork progression. This chain is Chromosome transmission fidelity protein 8 homolog, found in Homo sapiens (Human).